The sequence spans 1511 residues: MSNNEKVLSPIEIKELERPQDFSAFQLKLASPEKILSWSCGEVKKPETINYRTLKPERDGLFCAKIFGPVKDYECLCGKYKKMRYKGVVCEKCGVEVTSSKVRRHRMGHIELVSPVAHIWMVSSLPTRIGTLLGVKLKDLERVLYYEAYIVSNPGEAYYDNEKTKKVEKYDILNEEQYRTISDLFEHTGFEANMGGEIVRDLLAGLDLFELLTLLKEEMETTKSEAKRKTIIKRLKVVENFLNSGNRPEWMMLTQLPVLPPDLRPLVSLDGGKFAVSDVNDLYRRVINRNNRLKRLTELDAPEIIIRNEKRMLQEAVDALFDNGKTANAVKGANKRPLKSLSEIIKGKQGRFRQNLLGKRVDFSGRSVIVVGPSLNMDQCGIPKKMALELFKPHLMAKLEEKGYATTLKAAKRLIENESNEVWECLNEIVDEYPILLNRAPTLHKLSIQAFHPVLIDGKAIRLHPLVCAAFNADFDGDQMAVHVPLSQEAVAEAKILMMSSMNILLPASGRAIAVPSQDMILGIYYLSLVKEGVKGEHKLFTDVNEVKIALDMGQIDLHAKIRTRIGDRIIQTTVGRLIIHEILPSFVPANLWNKILKKKDIGILVDYIYKEAGYEVTPRFLDDLKNLGFKYATIAGISISIDDIRVPENKIMHISKSKKDVIEVQKQFSQGLLTEQERYNKIIDIWTEVNNKLASEMMELVKGDKNGFNSIYMMADSGARGSAAQIRQLSGMRGLMAKPDGSIIETPIISNFREGLNVLEYFISTHGARKGLADTALKTANAGYLTRKLIDVSQNVRITIEDCGTHEGIEITDITSGNELIESLEERITGRVIAEDIIDPISNEILFAEGTLITEEDAKVVTEAEVKSVVIRTPLTCKVENGLCSKCYGLNLGEQRKAKPGEAVGVVAAQSIGEPGTQLTLRTFHVGGTASATQTERELKADKEGFIRYYNIKKYVTTDGKIIVANRRNAGLLLVEPKINAPFKGKVTVETVHEEIILTIANSTEEKKYFLRKNDVAKANELAGISGKIEGKLYLPYKDGEEVNLNESIVEIIKDGWNVPNRIPFASELKVEDGAPVTSKIITGAKGIVKYYKLTGDYLERRHDIKAGDIITEKGLFAVIADTEDREALRHYISRGSCIALNDNTEVEKDTVISAPAKNEQVVIAEWDPYANPTIAEKAGVISFEDVIPGVTVSEQFDELTGTSKLVINEYIPSGYKPTVILTTDDNEIIRYSLDPKISLNVSEGKRVEVADIIGKTPKATQKSKDITGGLPRVSELFEARRPKNIAILASFDGVVSFGKGLRNKQKILITDSTGNSVEYLVEKSKQVLVHEGEFVHAGEALTDGQISPHDILRILGEKALHYFIVSEVQQVYRSQGVNIADKHIEVITSQMLRQVSILDGGDTKFIVGDMISKKKFKLENEKIIKLGGNPAIAEPLLLGITRAAVTSDSIISAASFQETTKVLTEAAISAKMDMLEDLKENVVIGRTIPVGTGLYKDQKVKFSEQEISK.

Positions 75, 77, 90, and 93 each coordinate Zn(2+). Mg(2+) is bound by residues D474, D476, and D478. 4 residues coordinate Zn(2+): C804, C878, C885, and C888.

This sequence belongs to the RNA polymerase beta' chain family. As to quaternary structure, the RNAP catalytic core consists of 2 alpha, 1 beta, 1 beta' and 1 omega subunit. When a sigma factor is associated with the core the holoenzyme is formed, which can initiate transcription. Requires Mg(2+) as cofactor. The cofactor is Zn(2+).

The catalysed reaction is RNA(n) + a ribonucleoside 5'-triphosphate = RNA(n+1) + diphosphate. Its function is as follows. DNA-dependent RNA polymerase catalyzes the transcription of DNA into RNA using the four ribonucleoside triphosphates as substrates. The polypeptide is DNA-directed RNA polymerase subunit beta' (Aliarcobacter butzleri (strain RM4018) (Arcobacter butzleri)).